A 396-amino-acid chain; its full sequence is Elongation factor Tu (396 aa).

The 195-residue stretch at 11 to 205 (KPHVNIGTIG…TVDEYIPTPE (195 aa)) folds into the tr-type G domain. The interval 20-27 (GHVDHGKT) is G1. 20–27 (GHVDHGKT) is a GTP binding site. Mg(2+) is bound at residue Thr-27. The G2 stretch occupies residues 61–65 (GITIN). A G3 region spans residues 82–85 (DAPG). GTP-binding positions include 82–86 (DAPGH) and 137–140 (NKCD). Positions 137–140 (NKCD) are G4. A G5 region spans residues 175 to 177 (SAL).

It belongs to the TRAFAC class translation factor GTPase superfamily. Classic translation factor GTPase family. EF-Tu/EF-1A subfamily. Monomer.

Its subcellular location is the cytoplasm. The catalysed reaction is GTP + H2O = GDP + phosphate + H(+). GTP hydrolase that promotes the GTP-dependent binding of aminoacyl-tRNA to the A-site of ribosomes during protein biosynthesis. This is Elongation factor Tu from Lactobacillus helveticus (strain DPC 4571).